The primary structure comprises 475 residues: Vitronectin (475 aa).

The signal sequence occupies residues 1 to 19; it reads MAPLRPIFTLALLLWVVLA. The 44-residue stretch at 20 to 63 folds into the SMB domain; the sequence is DQESCKDRCTEGFNANRKCQCDELCSYYQSCCADYAAECKPQVT. Intrachain disulfides connect cysteine 24-cysteine 28, cysteine 24-cysteine 40, cysteine 28-cysteine 58, cysteine 38-cysteine 40, cysteine 38-cysteine 51, cysteine 44-cysteine 50, and cysteine 51-cysteine 58. The short motif at 64–66 is the Cell attachment site element; that stretch reads RGD. Phosphothreonine is present on threonine 69. 3 positions are modified to sulfotyrosine: tyrosine 75, tyrosine 78, and tyrosine 80. The N-linked (GlcNAc...) asparagine glycan is linked to asparagine 87. Positions 87–123 are disordered; sequence NASVHAQPESPTVGQEPTLSPDLQTEGGAEPTHEVPL. Polar residues predominate over residues 95–109; it reads ESPTVGQEPTLSPDL. Hemopexin repeat units lie at residues 158–202, 203–250, and 251–305; these read GKPF…VWGI, EGPI…FSGI, and PDNV…FEHF. N-linked (GlcNAc...) asparagine glycans are attached at residues asparagine 169 and asparagine 242. Sulfotyrosine occurs at positions 279 and 282. The residue at position 312 (serine 312) is a Phosphoserine. Residues 359–391 are disordered; the sequence is LTPSPSAKKQKSRRRSRKRYRSRYGRGRSQNSR. The span at 366–384 shows a compositional bias: basic residues; sequence KKQKSRRRSRKRYRSRYGR. A glycosaminoglycan binding region region spans residues 366–392; that stretch reads KKQKSRRRSRKRYRSRYGRGRSQNSRR. Position 394 is a phosphoserine (serine 394). One copy of the Hemopexin 4 repeat lies at 419 to 469; sequence TSWLKPATSEPIQSVYFFSGDKYYRVNLRTQRVDTVNPPYPRSIAQYWLGC.

Interacts with SERPINE1/PAI1 and C1QBP. Monomer. Post-translationally, sulfated on tyrosine residues. N- and O-glycosylated. In terms of processing, it has been suggested that the active SMB domain may be permitted considerable disulfide bond heterogeneity or variability, thus two alternate disulfide patterns based on 3D structures are described with 1 disulfide bond conserved in both. As to expression, plasma.

The protein resides in the secreted. It localises to the extracellular space. In terms of biological role, vitronectin is a cell adhesion and spreading factor found in serum and tissues. Vitronectin interact with glycosaminoglycans and proteoglycans. Is recognized by certain members of the integrin family and serves as a cell-to-substrate adhesion molecule. Inhibitor of the membrane-damaging effect of the terminal cytolytic complement pathway. The protein is Vitronectin (VTN) of Oryctolagus cuniculus (Rabbit).